We begin with the raw amino-acid sequence, 423 residues long: UDP-N-acetylglucosamine 1-carboxyvinyltransferase 1 (423 aa).

Residue 23-24 participates in phosphoenolpyruvate binding; the sequence is KN. Arg96 serves as a coordination point for UDP-N-acetyl-alpha-D-glucosamine. Residue Cys120 is the Proton donor of the active site. At Cys120 the chain carries 2-(S-cysteinyl)pyruvic acid O-phosphothioketal. UDP-N-acetyl-alpha-D-glucosamine contacts are provided by residues 125 to 129, Asp309, and Val331; that span reads RPIDL.

Belongs to the EPSP synthase family. MurA subfamily.

Its subcellular location is the cytoplasm. The catalysed reaction is phosphoenolpyruvate + UDP-N-acetyl-alpha-D-glucosamine = UDP-N-acetyl-3-O-(1-carboxyvinyl)-alpha-D-glucosamine + phosphate. It functions in the pathway cell wall biogenesis; peptidoglycan biosynthesis. Cell wall formation. Adds enolpyruvyl to UDP-N-acetylglucosamine. The sequence is that of UDP-N-acetylglucosamine 1-carboxyvinyltransferase 1 from Streptococcus thermophilus (strain ATCC BAA-250 / LMG 18311).